Here is a 993-residue protein sequence, read N- to C-terminus: Serine/threonine-protein phosphatase 6 regulatory ankyrin repeat subunit B (993 aa).

28 ANK repeats span residues 7 to 36, 40 to 69, 73 to 102, 106 to 135, 139 to 168, 172 to 201, 205 to 234, 238 to 267, 271 to 301, 305 to 334, 338 to 367, 371 to 400, 404 to 433, 437 to 466, 470 to 498, 531 to 561, 566 to 595, 599 to 628, 633 to 662, 669 to 698, 702 to 731, 735 to 764, 771 to 800, 803 to 832, 838 to 867, 871 to 901, 905 to 934, and 941 to 970; these read CEQP…DVNA, EKRT…RVNA, MWLT…DVNA, NWQT…SVNV, GGRT…NINA, KDRR…EVTC, KGYT…EIDE, YGNT…NVNQ, SGFT…DVNI, DGKS…EIDC, DGNT…DTAK, HSMF…EIDT, FGRT…DFHK, CGRT…NVNE, WGRT…DNSE, EGYN…GFEE, ALKS…DLDI, KGRT…SIFV, TKRT…NPEV, KGQT…NVDA, VGCT…SILC, RGRT…SEED, QGYT…FRKF, NPFT…PSIV, KGRT…QVNA, SGKT…DLTV, DLNT…DESL, and ALQT…CVLA. Residues 974-993 form a disordered region; the sequence is NASRSNGPRSPPGTAVRKEE.

Protein phosphatase 6 (PP6) holoenzyme is proposed to be a heterotrimeric complex formed by the catalytic subunit, a SAPS domain-containing subunit (PP6R) and an ankyrin repeat-domain containing regulatory subunit (ARS). Interacts with PPP6R1.

Its function is as follows. Putative regulatory subunit of protein phosphatase 6 (PP6) that may be involved in the recognition of phosphoprotein substrates. The protein is Serine/threonine-protein phosphatase 6 regulatory ankyrin repeat subunit B (Ankrd44) of Mus musculus (Mouse).